A 163-amino-acid chain; its full sequence is Nucleotide-binding protein NT01EI_1072 (163 aa).

It belongs to the YajQ family.

Functionally, nucleotide-binding protein. The sequence is that of Nucleotide-binding protein NT01EI_1072 from Edwardsiella ictaluri (strain 93-146).